The sequence spans 284 residues: 2-dehydro-3-deoxyphosphooctonate aldolase (284 aa).

This sequence belongs to the KdsA family.

It is found in the cytoplasm. It catalyses the reaction D-arabinose 5-phosphate + phosphoenolpyruvate + H2O = 3-deoxy-alpha-D-manno-2-octulosonate-8-phosphate + phosphate. Its pathway is carbohydrate biosynthesis; 3-deoxy-D-manno-octulosonate biosynthesis; 3-deoxy-D-manno-octulosonate from D-ribulose 5-phosphate: step 2/3. It functions in the pathway bacterial outer membrane biogenesis; lipopolysaccharide biosynthesis. This Photorhabdus laumondii subsp. laumondii (strain DSM 15139 / CIP 105565 / TT01) (Photorhabdus luminescens subsp. laumondii) protein is 2-dehydro-3-deoxyphosphooctonate aldolase.